Consider the following 211-residue polypeptide: Endonuclease III (211 aa).

The HhH domain occupies 111–130 (AHALESLPGVGHKTANVVLN). The [4Fe-4S] cluster site is built by Cys-190, Cys-197, Cys-200, and Cys-206.

This sequence belongs to the Nth/MutY family. The cofactor is [4Fe-4S] cluster.

It carries out the reaction 2'-deoxyribonucleotide-(2'-deoxyribose 5'-phosphate)-2'-deoxyribonucleotide-DNA = a 3'-end 2'-deoxyribonucleotide-(2,3-dehydro-2,3-deoxyribose 5'-phosphate)-DNA + a 5'-end 5'-phospho-2'-deoxyribonucleoside-DNA + H(+). In terms of biological role, DNA repair enzyme that has both DNA N-glycosylase activity and AP-lyase activity. The DNA N-glycosylase activity releases various damaged pyrimidines from DNA by cleaving the N-glycosidic bond, leaving an AP (apurinic/apyrimidinic) site. The AP-lyase activity cleaves the phosphodiester bond 3' to the AP site by a beta-elimination, leaving a 3'-terminal unsaturated sugar and a product with a terminal 5'-phosphate. The sequence is that of Endonuclease III from Treponema pallidum (strain Nichols).